Reading from the N-terminus, the 150-residue chain is Small ribosomal subunit protein eS19S (150 aa).

The protein belongs to the eukaryotic ribosomal protein eS19 family.

This is Small ribosomal subunit protein eS19S (RPS19S) from Ascaris suum (Pig roundworm).